Consider the following 746-residue polypeptide: NAD(P)H-quinone oxidoreductase subunit 5, chloroplastic (746 aa).

Transmembrane regions (helical) follow at residues 9 to 29 (WIIPFIPLPVPILLGVGLLLF), 40 to 60 (WTFLSIFLLSIVMIFSLYLSI), 89 to 109 (IDPLTSIMSILITTVGILVLI), 125 to 145 (FAYMGFFNTSMLGLVTSSNLI), 147 to 167 (VYFFWELVGMCSYLLIGFWFT), 185 to 205 (GDFGLLLGILGLYWITGSFEF), 221 to 241 (VNLLFLTLCAFLLFVGPIAKS), 258 to 278 (TPISALIHAATMVAAGIFLVA), 280 to 300 (LLPLFIVIPSIMYIISLIGII), 327 to 347 (LGYMMLALGMGSYRSALFHLI), 354 to 374 (ALLFLGSGSIIHSMEAIVGYS), 396 to 416 (TAFLVGTLSLCGIPPLACFWS), 425 to 445 (LLFSPIFAIIACSTAGLTAFY), 547 to 567 (ILFPMLVLLLFTLFIGAIGIP), 608 to 628 (FSVSIAVFGIFIAYCLYKPFY), and 723 to 743 (YLFLYLSYVLIFLMILFFFYF).

This sequence belongs to the complex I subunit 5 family. NDH is composed of at least 16 different subunits, 5 of which are encoded in the nucleus.

Its subcellular location is the plastid. It localises to the chloroplast thylakoid membrane. It carries out the reaction a plastoquinone + NADH + (n+1) H(+)(in) = a plastoquinol + NAD(+) + n H(+)(out). The catalysed reaction is a plastoquinone + NADPH + (n+1) H(+)(in) = a plastoquinol + NADP(+) + n H(+)(out). NDH shuttles electrons from NAD(P)H:plastoquinone, via FMN and iron-sulfur (Fe-S) centers, to quinones in the photosynthetic chain and possibly in a chloroplast respiratory chain. The immediate electron acceptor for the enzyme in this species is believed to be plastoquinone. Couples the redox reaction to proton translocation, and thus conserves the redox energy in a proton gradient. This Crucihimalaya wallichii (Rock-cress) protein is NAD(P)H-quinone oxidoreductase subunit 5, chloroplastic (ndhF).